A 290-amino-acid polypeptide reads, in one-letter code: Succinate dehydrogenase [ubiquinone] iron-sulfur subunit, mitochondrial (290 aa).

A mitochondrion-targeting transit peptide spans 1 to 38 (MAAAVVGVSLRRGVPARFLRAGLRPVRGLEAVHGICRG). Residues 50-143 (KKFSIYRWDP…TTKIYPLPHM (94 aa)) form the 2Fe-2S ferredoxin-type domain. Cys103, Cys108, Cys111, and Cys123 together coordinate [2Fe-2S] cluster. The 31-residue stretch at 186-216 (DRQKLDGLYECILCACCSTSCPSYWWNGDKY) folds into the 4Fe-4S ferredoxin-type domain. Residues Cys196, Cys199, and Cys202 each coordinate [4Fe-4S] cluster. A [3Fe-4S] cluster-binding site is contributed by Cys206. Trp211 lines the a ubiquinone pocket. The [3Fe-4S] cluster site is built by Cys253 and Cys259. Residue Cys263 coordinates [4Fe-4S] cluster.

Belongs to the succinate dehydrogenase/fumarate reductase iron-sulfur protein family. As to quaternary structure, component of complex II composed of four subunits: the flavoprotein (FP) SDHA, iron-sulfur protein (IP) SDHB, and a cytochrome b560 composed of SDHC and SDHD. [2Fe-2S] cluster serves as cofactor. It depends on [3Fe-4S] cluster as a cofactor. Requires [4Fe-4S] cluster as cofactor.

The protein resides in the mitochondrion inner membrane. It carries out the reaction a quinone + succinate = fumarate + a quinol. The catalysed reaction is (R)-malate + a quinone = enol-oxaloacetate + a quinol. It catalyses the reaction (S)-malate + a quinone = enol-oxaloacetate + a quinol. It participates in carbohydrate metabolism; tricarboxylic acid cycle; fumarate from succinate (eukaryal route): step 1/1. Its activity is regulated as follows. Enol-oxaloacetate inhibits the succinate dehydrogenase activity. In terms of biological role, iron-sulfur protein (IP) subunit of the succinate dehydrogenase complex (mitochondrial respiratory chain complex II), responsible for transferring electrons from succinate to ubiquinone (coenzyme Q). SDH also oxidizes malate to the non-canonical enol form of oxaloacetate, enol-oxaloacetate. Enol-oxaloacetate, which is a potent inhibitor of the succinate dehydrogenase activity, is further isomerized into keto-oxaloacetate. This is Succinate dehydrogenase [ubiquinone] iron-sulfur subunit, mitochondrial (SDHB) from Gallus gallus (Chicken).